The sequence spans 396 residues: DnaJ homolog subfamily A member 1 (396 aa).

The 63-residue stretch at Thr-6–Gly-68 folds into the J domain. Residue Lys-66 is modified to N6-acetyllysine. Phosphoserine is present on Ser-83. A CR-type zinc finger spans residues Gly-120–Lys-204. The Zn(2+) site is built by Cys-133, Cys-136, Cys-149, Cys-152, Cys-176, Cys-179, Cys-192, and Cys-195. CXXCXGXG motif repeat units follow at residues Cys-133–Gly-140, Cys-149–Gly-156, Cys-176–Gly-183, and Cys-192–Lys-199. A Phosphoserine modification is found at Ser-334. The tract at residues Val-351–Ser-396 is disordered. Acidic residues predominate over residues Glu-352 to Asp-364. Tyr-380 is subject to Phosphotyrosine. Cys-393 carries the post-translational modification Cysteine methyl ester. Cys-393 carries the S-farnesyl cysteine lipid modification. The propeptide at Gln-394–Ser-396 is removed in mature form.

As to quaternary structure, identified in a complex with HSPA1B and BAX. Interacts with RNF207.

The protein localises to the membrane. Its subcellular location is the cytoplasm. It localises to the microsome. It is found in the mitochondrion. The protein resides in the nucleus. The protein localises to the perinuclear region. Its function is as follows. Co-chaperone for HSPA8/Hsc70. Plays a role in protein transport into mitochondria via its role as co-chaperone. Functions as co-chaperone for HSPA1B and negatively regulates the translocation of BAX from the cytosol to mitochondria in response to cellular stress, thereby protecting cells against apoptosis. Stimulates ATP hydrolysis, but not the folding of unfolded proteins mediated by HSPA1A (in vitro). Promotes apoptosis in response to cellular stress mediated by exposure to anisomycin or UV. The polypeptide is DnaJ homolog subfamily A member 1 (DNAJA1) (Pongo abelii (Sumatran orangutan)).